Here is a 337-residue protein sequence, read N- to C-terminus: MIQKNWQELIKPNKVDFITHGSRAHATVVAEPLERGFGLTLGNALRRVLLSSLRGAAVTAVQIDGVLHEFSSIPGVREDVTDIVLNIKEIAIRMEGEGPKRMVVRKEGPGVVTAGDIQTVGDVEILNPEHAICTLDEGAEICMEFTVNTGKGYVPADRNRAEDAPIGLIPVDSLYSPVRKVSYKIENTREGQVLDYDKLTLNIETNGSVTGEDAVAYAARILQDQLSIFVNFEEPQKEAPQEQVAELAFNPALLKKVDELELSVRSANCLKNDNIVYIGDLIQKTEAEMLRTPNFGRKSLNEIKEVLASMGLHLGMEIPAWPPENIEDLAKRYEDQY.

An alpha N-terminal domain (alpha-NTD) region spans residues 1 to 233 (MIQKNWQELI…DQLSIFVNFE (233 aa)). The tract at residues 249 to 337 (FNPALLKKVD…DLAKRYEDQY (89 aa)) is alpha C-terminal domain (alpha-CTD).

The protein belongs to the RNA polymerase alpha chain family. As to quaternary structure, homodimer. The RNAP catalytic core consists of 2 alpha, 1 beta, 1 beta' and 1 omega subunit. When a sigma factor is associated with the core the holoenzyme is formed, which can initiate transcription.

The enzyme catalyses RNA(n) + a ribonucleoside 5'-triphosphate = RNA(n+1) + diphosphate. Its function is as follows. DNA-dependent RNA polymerase catalyzes the transcription of DNA into RNA using the four ribonucleoside triphosphates as substrates. In Brucella ovis (strain ATCC 25840 / 63/290 / NCTC 10512), this protein is DNA-directed RNA polymerase subunit alpha.